The following is a 458-amino-acid chain: Acetyl-CoA decarbonylase/synthase complex subunit gamma (458 aa).

The 59-residue stretch at 1 to 59 (MQVTAMDVYRLLPKTNCGKCNEASCMAFATKLIEKEVTLDDCPQLSGDERQKLENLLAP) folds into the 4Fe-4S domain. [4Fe-4S] cluster-binding residues include C17, C20, C25, and C42.

In terms of assembly, heterodimer of delta and gamma chains. The ACDS complex is made up of alpha, epsilon, beta, gamma and delta chains with a probable stoichiometry of (alpha(2)epsilon(2))(4)-beta(8)-(gamma(1)delta(1))(8). It depends on corrinoid as a cofactor. [4Fe-4S] cluster serves as cofactor.

The enzyme catalyses 5,6,7,8-tetrahydrosarcinapterin + methyl-Co(III)-[corrinoid Fe-S protein] = 5-methyltetrahydrosarcinapterin + Co(I)-[corrinoid Fe-S protein] + H(+). Its function is as follows. Part of a complex that catalyzes the reversible cleavage of acetyl-CoA, allowing autotrophic growth from CO(2). This is Acetyl-CoA decarbonylase/synthase complex subunit gamma from Methanothermobacter thermautotrophicus (strain ATCC 29096 / DSM 1053 / JCM 10044 / NBRC 100330 / Delta H) (Methanobacterium thermoautotrophicum).